Consider the following 383-residue polypeptide: Anhydro-N-acetylmuramic acid kinase (383 aa).

ATP is bound at residue 9 to 16 (GTSLDGID).

It belongs to the anhydro-N-acetylmuramic acid kinase family.

The catalysed reaction is 1,6-anhydro-N-acetyl-beta-muramate + ATP + H2O = N-acetyl-D-muramate 6-phosphate + ADP + H(+). It functions in the pathway amino-sugar metabolism; 1,6-anhydro-N-acetylmuramate degradation. The protein operates within cell wall biogenesis; peptidoglycan recycling. In terms of biological role, catalyzes the specific phosphorylation of 1,6-anhydro-N-acetylmuramic acid (anhMurNAc) with the simultaneous cleavage of the 1,6-anhydro ring, generating MurNAc-6-P. Is required for the utilization of anhMurNAc either imported from the medium or derived from its own cell wall murein, and thus plays a role in cell wall recycling. This chain is Anhydro-N-acetylmuramic acid kinase, found in Bacillus cereus (strain ATCC 10987 / NRS 248).